The chain runs to 232 residues: Triggering receptor expressed on myeloid cells 1 (232 aa).

The signal sequence occupies residues 1–20; the sequence is MRKAGVWGLLWMLFIEEIQA. In terms of domain architecture, Ig-like V-type spans 21 to 125; the sequence is AAEVFEEKCT…DPIILFHPVR (105 aa). Over 21-203 the chain is Extracellular; it reads AAEVFEEKCT…THVNRAPGIS (183 aa). A disulfide bridge links cysteine 41 with cysteine 109. The disordered stretch occupies residues 152–186; it reads PLPVTTKLRPRPRPRPKPVTQPIPTSADRLSSPGF. Asparagine 192 carries N-linked (GlcNAc...) asparagine glycosylation. The helical transmembrane segment at 204–224 threads the bilayer; it reads IIIPAACGLLSKTLVFIGLFA. Residues 225–232 lie on the Cytoplasmic side of the membrane; sequence VTHRSFAS.

In terms of assembly, monomer. Homomultimer; when activated. Interacts with TYROBP/DAP12. Interacts with TLR4. In terms of tissue distribution, detected in bone marrow, tongue, lung, liver, thymus, spleen, jejunum, ileum and lymph nodes.

It localises to the cell membrane. Its function is as follows. Cell surface receptor that plays important roles in innate and adaptive immunity by amplifying inflammatory responses. Upon activation by various ligands such as PGLYRP1, HMGB1 or HSP70, multimerizes and forms a complex with transmembrane adapter TYROBP/DAP12. In turn, initiates a SYK-mediated cascade of tyrosine phosphorylation, activating multiple downstream mediators such as BTK, MAPK1, MAPK3 or phospholipase C-gamma. This cascade promotes the neutrophil- and macrophage-mediated release of pro-inflammatory cytokines and/or chemokines, as well as their migration and thereby amplifies inflammatory responses that are triggered by bacterial and fungal infections. By also promoting the amplification of inflammatory signals that are initially triggered by Toll-like receptor (TLR) and NOD-like receptor engagement, plays a major role in the pathophysiology of acute and chronic inflammatory diseases of different etiologies including septic shock and atherosclerosis. This Bos taurus (Bovine) protein is Triggering receptor expressed on myeloid cells 1 (TREM1).